The chain runs to 469 residues: Tubulin gamma chain (469 aa).

A GTP-binding site is contributed by 142 to 148 (AGGTGSG).

The protein belongs to the tubulin family.

Its subcellular location is the cytoplasm. It localises to the cytoskeleton. The protein localises to the microtubule organizing center. The protein resides in the spindle pole body. Tubulin is the major constituent of microtubules. The gamma chain is found at microtubule organizing centers (MTOC) such as the spindle poles or the centrosome, suggesting that it is involved in the minus-end nucleation of microtubule assembly. The polypeptide is Tubulin gamma chain (TUB4) (Microbotryum violaceum (Anther smut fungus)).